The primary structure comprises 763 residues: U3 small nucleolar RNA-associated protein 25 homolog (763 aa).

The disordered stretch occupies residues 1 to 164; that stretch reads MGKRRSRGRS…SQKSSEEFTD (164 aa). Promotes p53/TP53 degradation regions lie at residues 1 to 190 and 580 to 642; these read MGKR…SQRT and VQLP…KKEE. Phosphoserine is present on Ser10. The span at 25–43 shows a compositional bias: basic and acidic residues; that stretch reads RDFGEEHPFYDRVSKKEVK. Phosphoserine is present on residues Ser52, Ser60, and Ser64. Over residues 54–70 the composition is skewed to basic and acidic residues; that stretch reads DSSHSESESESEQEHVS. Acidic residues predominate over residues 84–119; it reads EEEEEEEEEEEEEEEDKEEVDDSAVGDSEMNGEDGG. The represses p53/TP53 degradation stretch occupies residues 643 to 704; the sequence is LNFTHICEYT…YELPTYAHFY (62 aa).

This sequence belongs to the UTP25 family. Interacts with CAPN3; the interaction is required for CAPN3 translocation to the nucleolus. In terms of processing, phosphorylated. Phosphorylation is required to promote p53/TP53 degradation in the nucleolus which promotes cell cycle progression and liver development.

The protein localises to the nucleus. The protein resides in the nucleolus. Its function is as follows. Component of the ribosomal small subunit processome for the biogenesis of ribosomes, functions in pre-ribosomal RNA (pre-rRNA) processing. Essential for embryonic development in part through the regulation of p53 pathway. Controls the expansion growth of digestive organs and liver. Also involved in the sympathetic neuronal development. Mediates, with CAPN3, the proteasome-independent degradation of p53/TP53. This Rattus norvegicus (Rat) protein is U3 small nucleolar RNA-associated protein 25 homolog.